Here is a 233-residue protein sequence, read N- to C-terminus: 7-cyano-7-deazaguanine synthase (233 aa).

Residue 7–17 (LSGGLDSAVTS) participates in ATP binding. Zn(2+) contacts are provided by C195, C206, C209, and C212.

The protein belongs to the QueC family. It depends on Zn(2+) as a cofactor.

The enzyme catalyses 7-carboxy-7-deazaguanine + NH4(+) + ATP = 7-cyano-7-deazaguanine + ADP + phosphate + H2O + H(+). Its pathway is purine metabolism; 7-cyano-7-deazaguanine biosynthesis. In terms of biological role, catalyzes the ATP-dependent conversion of 7-carboxy-7-deazaguanine (CDG) to 7-cyano-7-deazaguanine (preQ(0)). This chain is 7-cyano-7-deazaguanine synthase, found in Methanococcus maripaludis (strain C7 / ATCC BAA-1331).